The chain runs to 152 residues: Ribosome maturation factor RimP (152 aa).

It belongs to the RimP family.

The protein resides in the cytoplasm. Required for maturation of 30S ribosomal subunits. The sequence is that of Ribosome maturation factor RimP from Sodalis glossinidius (strain morsitans).